Consider the following 491-residue polypeptide: Ketol-acid reductoisomerase (NADP(+)) (491 aa).

Positions 15–208 (AQLGTCRFME…GGHRAGVLES (194 aa)) constitute a KARI N-terminal Rossmann domain. NADP(+) contacts are provided by residues 45-48 (CGAQ), Arg68, Arg76, Ser78, and 108-110 (DKQ). The active site involves His132. Gly158 provides a ligand contact to NADP(+). 2 consecutive KARI C-terminal knotted domains span residues 209–353 (SFVA…KEQE) and 354–486 (YFDK…MTAM). 4 residues coordinate Mg(2+): Asp217, Glu221, Glu389, and Glu393. Ser414 lines the substrate pocket.

It belongs to the ketol-acid reductoisomerase family. Mg(2+) is required as a cofactor.

It catalyses the reaction (2R)-2,3-dihydroxy-3-methylbutanoate + NADP(+) = (2S)-2-acetolactate + NADPH + H(+). The catalysed reaction is (2R,3R)-2,3-dihydroxy-3-methylpentanoate + NADP(+) = (S)-2-ethyl-2-hydroxy-3-oxobutanoate + NADPH + H(+). It participates in amino-acid biosynthesis; L-isoleucine biosynthesis; L-isoleucine from 2-oxobutanoate: step 2/4. Its pathway is amino-acid biosynthesis; L-valine biosynthesis; L-valine from pyruvate: step 2/4. Involved in the biosynthesis of branched-chain amino acids (BCAA). Catalyzes an alkyl-migration followed by a ketol-acid reduction of (S)-2-acetolactate (S2AL) to yield (R)-2,3-dihydroxy-isovalerate. In the isomerase reaction, S2AL is rearranged via a Mg-dependent methyl migration to produce 3-hydroxy-3-methyl-2-ketobutyrate (HMKB). In the reductase reaction, this 2-ketoacid undergoes a metal-dependent reduction by NADPH to yield (R)-2,3-dihydroxy-isovalerate. The sequence is that of Ketol-acid reductoisomerase (NADP(+)) from Christiangramia forsetii (strain DSM 17595 / CGMCC 1.15422 / KT0803) (Gramella forsetii).